A 271-amino-acid chain; its full sequence is Protein FANTASTIC FOUR 1 (271 aa).

Residues 114–168 form the FAF domain; it reads NSFPPPLNSVNGFNNSRMVKSYKEDGRLVVQAIRVCSPPRCFVSERREGRLRLCL. Positions 174 to 255 are disordered; sequence NSQDAEEEFE…KRRCNENGCE (82 aa). Residues 177 to 224 are compositionally biased toward acidic residues; sequence DAEEEFEEEDEDDQYDAEEEEEEEEEEEEEEEEEEEEEEEEEEEDEEG. A compositionally biased stretch (basic residues) spans 237-247; the sequence is GNKKVSNRPKR.

It belongs to the fantastic four family. Expressed in the shoot apex, stamens, anthers and young siliques. Detected in provascular and vascular tissue.

Functionally, able to repress WUS when constitutively overexpressed, but have no effect on CLV3. This Arabidopsis thaliana (Mouse-ear cress) protein is Protein FANTASTIC FOUR 1 (FAF1).